Consider the following 121-residue polypeptide: Large ribosomal subunit protein bL19 (121 aa).

Belongs to the bacterial ribosomal protein bL19 family.

This protein is located at the 30S-50S ribosomal subunit interface and may play a role in the structure and function of the aminoacyl-tRNA binding site. The protein is Large ribosomal subunit protein bL19 of Chlamydia trachomatis serovar L2 (strain ATCC VR-902B / DSM 19102 / 434/Bu).